A 453-amino-acid polypeptide reads, in one-letter code: Regulatory protein opaque-2 (453 aa).

Positions 145 to 243 (SSVVTSDQRS…SNRESARRSR (99 aa)) are disordered. Residues 146–175 (SVVTSDQRSQGSNNHTGGSSIRNNPVQNKL) show a composition bias toward polar residues. Over residues 207–216 (PSDEDMDGEV) the composition is skewed to acidic residues. Basic and acidic residues predominate over residues 224 to 240 (PTEERVRKKESNRESAR). A bZIP domain is found at 225 to 288 (TEERVRKKES…NDANVDNRVL (64 aa)). The basic motif stretch occupies residues 228 to 251 (RVRKKESNRESARRSRYRKAAHLK). Residues 253 to 274 (LEDQVAQLKAENSCLLRRIAAL) are leucine-zipper.

This sequence belongs to the bZIP family. Interacts with the Dof zinc finger protein PBF. In terms of tissue distribution, seed endosperm.

The protein resides in the nucleus. Functionally, involved in the regulation of the endosperm-specific production of albumin b-32 and other zein proteins. It is a trans-acting transcriptional activator that binds to the consensus sequence 5'-GATGAYRTGR-3'. This Zea mays (Maize) protein is Regulatory protein opaque-2 (O2).